A 937-amino-acid chain; its full sequence is Isoleucine--tRNA ligase (937 aa).

Residues 58–68 (PYANGSIHIGH) carry the 'HIGH' region motif. Position 561 (E561) interacts with L-isoleucyl-5'-AMP. The 'KMSKS' region signature appears at 602–606 (KMSKS). Residue K605 participates in ATP binding. 4 residues coordinate Zn(2+): C900, C903, C920, and C923.

Belongs to the class-I aminoacyl-tRNA synthetase family. IleS type 1 subfamily. As to quaternary structure, monomer. It depends on Zn(2+) as a cofactor.

Its subcellular location is the cytoplasm. It carries out the reaction tRNA(Ile) + L-isoleucine + ATP = L-isoleucyl-tRNA(Ile) + AMP + diphosphate. Functionally, catalyzes the attachment of isoleucine to tRNA(Ile). As IleRS can inadvertently accommodate and process structurally similar amino acids such as valine, to avoid such errors it has two additional distinct tRNA(Ile)-dependent editing activities. One activity is designated as 'pretransfer' editing and involves the hydrolysis of activated Val-AMP. The other activity is designated 'posttransfer' editing and involves deacylation of mischarged Val-tRNA(Ile). In Pectobacterium atrosepticum (strain SCRI 1043 / ATCC BAA-672) (Erwinia carotovora subsp. atroseptica), this protein is Isoleucine--tRNA ligase.